We begin with the raw amino-acid sequence, 118 residues long: uncharacterized protein (118 aa).

The N-terminal stretch at 1–27 (MPIKEPDVWALIWSWLQTNLSSSSAQS) is a signal peptide.

This is an uncharacterized protein from Haemophilus influenzae (strain ATCC 51907 / DSM 11121 / KW20 / Rd).